The primary structure comprises 102 residues: Small ribosomal subunit protein uS10 (102 aa).

This sequence belongs to the universal ribosomal protein uS10 family. Part of the 30S ribosomal subunit.

In terms of biological role, involved in the binding of tRNA to the ribosomes. The sequence is that of Small ribosomal subunit protein uS10 from Streptococcus thermophilus (strain ATCC BAA-250 / LMG 18311).